We begin with the raw amino-acid sequence, 167 residues long: Transcription factor E (167 aa).

The region spanning Glu5–Asp87 is the HTH TFE/IIEalpha-type domain.

This sequence belongs to the TFE family. As to quaternary structure, monomer. Interaction with RNA polymerase subunits RpoF and RpoE is necessary for Tfe stimulatory transcription activity. Able to interact with Tbp and RNA polymerase in the absence of DNA promoter. Interacts both with the preinitiation and elongation complexes.

Transcription factor that plays a role in the activation of archaeal genes transcribed by RNA polymerase. Facilitates transcription initiation by enhancing TATA-box recognition by TATA-box-binding protein (Tbp), and transcription factor B (Tfb) and RNA polymerase recruitment. Not absolutely required for transcription in vitro, but particularly important in cases where Tbp or Tfb function is not optimal. It dynamically alters the nucleic acid-binding properties of RNA polymerases by stabilizing the initiation complex and destabilizing elongation complexes. Seems to translocate with the RNA polymerase following initiation and acts by binding to the non template strand of the transcription bubble in elongation complexes. This is Transcription factor E from Methanothrix thermoacetophila (strain DSM 6194 / JCM 14653 / NBRC 101360 / PT) (Methanosaeta thermophila).